The primary structure comprises 310 residues: Beta-1,3-galactosyltransferase 5 (310 aa).

The Cytoplasmic segment spans residues 1–7 (MAFPKMR). The helical; Signal-anchor for type II membrane protein transmembrane segment at 8–28 (LMYICLLVLGALCLYFSMYSL) threads the bilayer. Residues 29-310 (NPFKEQSFVY…NSRGEDCPPV (282 aa)) lie on the Lumenal side of the membrane. N-linked (GlcNAc...) asparagine glycosylation is found at Asn130, Asn174, and Asn231.

It belongs to the glycosyltransferase 31 family. In terms of tissue distribution, expressed in stomach, jejunum, colon, pancreas, small intestine, testis and gastrointestinal and pancreatic cancer cell lines. Hardly detected in lung, liver, adrenal gland and peripheral blood leukocytes.

The protein localises to the golgi apparatus membrane. The enzyme catalyses a globoside Gb4Cer (d18:1(4E)) + UDP-alpha-D-galactose = a globoside GalGb4Cer (d18:1(4E)) + UDP + H(+). Its pathway is protein modification; protein glycosylation. In terms of biological role, catalyzes the transfer of Gal to GlcNAc-based acceptors with a preference for the core3 O-linked glycan GlcNAc(beta1,3)GalNAc structure. Can use glycolipid LC3Cer as an efficient acceptor. This is Beta-1,3-galactosyltransferase 5 from Homo sapiens (Human).